Reading from the N-terminus, the 215-residue chain is Protein GET1 (215 aa).

Residues 1-4 (MINL) are Lumenal-facing. Residues 5-24 (ALVIFLCTLLNQIVSWVGKS) form a helical membrane-spanning segment. Residues 25–108 (VLQEIAFTAY…SFSKKFSTLL (84 aa)) lie on the Cytoplasmic side of the membrane. Residues 73–94 (AKLRRKLDKGLADLEKTNNTLS) are a coiled coil. A helical membrane pass occupies residues 109–129 (WLMTTGAQFLLSWWFRKQPIF). Residues 130–153 (WLPEGWVPYPVAWLLSFPSAPIGS) lie on the Lumenal side of the membrane. Residues 154–170 (VSSGAWGAICRRVLSTL) form a helical membrane-spanning segment. The Cytoplasmic portion of the chain corresponds to 171–215 (QEIIQSVLAPSPAATGPVPTGPSSAKNDQPEAKIEALALEHEKLD). The tract at residues 181–202 (SPAATGPVPTGPSSAKNDQPEA) is disordered.

The protein belongs to the WRB/GET1 family. As to quaternary structure, interacts with GET3.

The protein resides in the endoplasmic reticulum membrane. In terms of biological role, required for the post-translational delivery of tail-anchored (TA) proteins to the endoplasmic reticulum. Acts as a membrane receptor for soluble GET3, which recognizes and selectively binds the transmembrane domain of TA proteins in the cytosol. In Cryptococcus neoformans var. neoformans serotype D (strain B-3501A) (Filobasidiella neoformans), this protein is Protein GET1.